A 344-amino-acid polypeptide reads, in one-letter code: tRNA N6-adenosine threonylcarbamoyltransferase (344 aa).

Fe cation is bound by residues His-119 and His-123. Substrate is bound by residues 141–145 (VVSGG), Asp-174, Gly-187, Asp-191, and Asn-280. Asp-310 provides a ligand contact to Fe cation.

Belongs to the KAE1 / TsaD family. Fe(2+) serves as cofactor.

Its subcellular location is the cytoplasm. It carries out the reaction L-threonylcarbamoyladenylate + adenosine(37) in tRNA = N(6)-L-threonylcarbamoyladenosine(37) in tRNA + AMP + H(+). Its function is as follows. Required for the formation of a threonylcarbamoyl group on adenosine at position 37 (t(6)A37) in tRNAs that read codons beginning with adenine. Is involved in the transfer of the threonylcarbamoyl moiety of threonylcarbamoyl-AMP (TC-AMP) to the N6 group of A37, together with TsaE and TsaB. TsaD likely plays a direct catalytic role in this reaction. This chain is tRNA N6-adenosine threonylcarbamoyltransferase, found in Listeria monocytogenes serotype 4b (strain CLIP80459).